Here is a 904-residue protein sequence, read N- to C-terminus: MRQGAPARGCRWFVVWALLGLTLGVLVASAAPSSPGTPGVAAATQAANGGPATPAPPALGAAPTGDPKPKKNKKPKNPTPPRPAGDNATVAAGHATLREHLRDIKAENTDANFYVCPPPTGATVVQFEQPRRCPTRPEGQNYTEGIAVVFKENIAPYKFKATMYYKDVTVSQVWFGHRYSQFMGIFEDRAPVPFEEVIDKINAKGVCRSTAKYVRNNLETTAFHRDDHETDMELKPANAATRTSRGWHTTDLKYNPSRVEAFHRYGTTVNCIVEEVDARSVYPYDEFVLATGDFVYMSPFYGYREGSHTEHTSYAADRFKQVDGFYARDLTTKARATAPTTRNLLTTPKFTVAWDWVPKRPSVCTMTKWQEVDEMLRSEYGGSFRFSSDAISTTFTTNLTEYPLSRVDLGDCIGKDARDAMDRIFARRYNATHIKVGQPQYYLANGGFLIAYQPLLSNTLAELYVREHLREQSRKPPNPTPPPPGASANASVERIKTTSSIEFARLQFTYNHIQRHVNDMLGRVAIAWCELQNHELTLWNEARKLNPNAIASATVGRRVSARMLGDVMAVSTCVPVAADNVIVQNSMRISSRPGACYSRPLVSFRYEDQGPLVEGQLGENNELRLTRDAIEPCTVGHRRYFTFGGGYVYFEESAYSHQLSRADITTVSTFIDLNITMLEDHEFVPLEVYTRHEIKDSGLLDYTEVQRRNQLHDLRFADIDTVIHADANAAMFAGLGAFFEGMGDLGRAVGKVVMGIVGGVVSAVSGVSSFMSNPFGALAVGLLVLAGLAAAFFAFRYVMRLQSNPMKALYPLTTKELKNPTNPDASGEGEEGGDFDEAKLAEAREMIRYMALVSAMERTEHKAKKKGTSALLSAKVTDMVMRKRRNTNYTQVPNKDGDADEDDL.

Residues 1-30 (MRQGAPARGCRWFVVWALLGLTLGVLVASA) form the signal peptide. Over residues 31–65 (APSSPGTPGVAAATQAANGGPATPAPPALGAAPTG) the composition is skewed to low complexity. The segment at 31–88 (APSSPGTPGVAAATQAANGGPATPAPPALGAAPTGDPKPKKNKKPKNPTPPRPAGDNA) is disordered. Residues 31–774 (APSSPGTPGV…SGVSSFMSNP (744 aa)) are Virion surface-facing. N-linked (GlcNAc...) asparagine; by host glycans are attached at residues Asn-87 and Asn-141. 5 disulfide bridges follow: Cys-116–Cys-573, Cys-133–Cys-529, Cys-207–Cys-271, Cys-364–Cys-412, and Cys-596–Cys-633. Involved in fusion and/or binding to host membrane regions lie at residues 173 to 179 (VWFGHRY) and 258 to 265 (RVEAFHRY). Asn-398 and Asn-430 each carry an N-linked (GlcNAc...) asparagine; by host glycan. Residues 470-492 (REQSRKPPNPTPPPPGASANASV) form a disordered region. Positions 476–485 (PPNPTPPPPG) are enriched in pro residues. Residue Asn-489 is glycosylated (N-linked (GlcNAc...) asparagine; by host). N-linked (GlcNAc...) asparagine; by host glycosylation occurs at Asn-674. Positions 719–772 (IDTVIHADANAAMFAGLGAFFEGMGDLGRAVGKVVMGIVGGVVSAVSGVSSFMS) are hydrophobic membrane proximal region. The helical transmembrane segment at 775–795 (FGALAVGLLVLAGLAAAFFAF) threads the bilayer. The Intravirion portion of the chain corresponds to 796 to 904 (RYVMRLQSNP…KDGDADEDDL (109 aa)). The short motif at 849 to 852 (YMAL) is the Golgi targeting element. The segment at 883–904 (KRRNTNYTQVPNKDGDADEDDL) is disordered. An Internalization motif motif is present at residues 889 to 892 (YTQV).

Belongs to the herpesviridae glycoprotein B family. In terms of assembly, homotrimer; disulfide-linked. Interacts with host receptor MYH9/NMMHC-IIA. Interacts with host receptor MYH10/NMMHC-IIB. Binds to heparan sulfate proteoglycans. Interacts with gH/gL heterodimer. The cytoplasmic tail is phosphorylated by the viral kinase US3. Phosphorylation may be linked to a down-regulation of gB expression on cell surface. Post-translationally, ubiquitinated.

Its subcellular location is the virion membrane. The protein resides in the host cell membrane. The protein localises to the host endosome membrane. It is found in the host Golgi apparatus membrane. Functionally, envelope glycoprotein that forms spikes at the surface of virion envelope and binds to the host cell entry receptors MYH9/NMMHC-IIA and MYH10/NMMHC-IIB, promoting the virus entry into host cells. Essential for the initial attachment to heparan sulfate moieties of the host cell surface proteoglycans. Involved in fusion of viral and cellular membranes leading to virus entry into the host cell: following initial binding to its host cell entry receptors, membrane fusion is mediated by the fusion machinery composed at least of gB and the heterodimer gH/gL. May be involved in the fusion between the virion envelope and the outer nuclear membrane during virion egress. Also plays a role, together with gK, in virus-induced cell-to-cell fusion (syncytia formation). This is Envelope glycoprotein B from Homo sapiens (Human).